A 308-amino-acid chain; its full sequence is MTTTLSNALLSDILQQIRPLIGQGKVADYIPALAQVPANQLAMAVYTVDGELYQAGMADKRFSIQSISKVLSLTLALTRYDESEIWQRVGKEPSGLPFNSLIQLEMEKGLPRNPFINAGAIVITDMLQSRLSAPKQRMLEVIRALTNTADICYNTVVAKSEMEHLSRNAAIAYLMKSFDNFDNDVITVLETYFHYCSIEMSCVELVRCFSYLANQGICVGSKNQIITPRQARQINALMLTCGMYDGAGEFAFRIGIPGKSGVGGGIIAVVPDAFTVAVWSPELDKSGNSLAGCAALELLANKVGRSIF.

S66, N117, E161, N168, Y192, Y244, and V262 together coordinate substrate.

The protein belongs to the glutaminase family. Homotetramer.

It carries out the reaction L-glutamine + H2O = L-glutamate + NH4(+). The protein is Glutaminase of Proteus mirabilis (strain HI4320).